A 76-amino-acid chain; its full sequence is Precursor of CEP7 (76 aa).

An N-terminal signal peptide occupies residues 1-27 (MAKCTLTSLILLLIVLVLIQESHIVEG). Residues 28–61 (RPLKSSRISNVSKKFAAGNSNLSSKLTTEDHSLD) constitute a propeptide that is removed on maturation. Residues asparagine 37 and asparagine 48 are each glycosylated (N-linked (GlcNAc...) asparagine). Residues 49 to 76 (LSSKLTTEDHSLDAFRPTNPGNSPGIGH) form a disordered region. Residues proline 65, proline 68, and proline 72 each carry the hydroxyproline modification.

The protein belongs to the C-terminally encoded plant signaling peptide (CEP) family. As to quaternary structure, interacts with CEP receptors (e.g. CEPR1 and CEPR2). The mature small signaling peptide is generated by proteolytic processing of the longer precursor.

It localises to the secreted. Its subcellular location is the extracellular space. It is found in the apoplast. In terms of biological role, extracellular signaling peptide that may regulate primary root growth rate and systemic nitrogen (N)-demand signaling. Mediates up-regulation of genes involved in N uptake and assimilation pathways. The protein is Precursor of CEP7 of Arabidopsis thaliana (Mouse-ear cress).